We begin with the raw amino-acid sequence, 149 residues long: MSGNRIQPRSVARLAAVQALYQMEVSGAGVDSVIREFGEHRFDRDVEGEQLAAADETFFADLARGVVTNQAKIDQGIVKRLASGWRLERLDATARAVLRAGAFELMYRSDVPTEVVINEYVEIAKSFFEGPESGFINGALDAIARDARD.

Belongs to the NusB family.

Functionally, involved in transcription antitermination. Required for transcription of ribosomal RNA (rRNA) genes. Binds specifically to the boxA antiterminator sequence of the ribosomal RNA (rrn) operons. The sequence is that of Transcription antitermination protein NusB from Caulobacter vibrioides (strain ATCC 19089 / CIP 103742 / CB 15) (Caulobacter crescentus).